Consider the following 255-residue polypeptide: Pyridoxine 5'-phosphate synthase (255 aa).

2 residues coordinate 3-amino-2-oxopropyl phosphate: asparagine 8 and arginine 19. The active-site Proton acceptor is the histidine 44. Residues arginine 46 and histidine 51 each contribute to the 1-deoxy-D-xylulose 5-phosphate site. Glutamate 74 acts as the Proton acceptor in catalysis. 1-deoxy-D-xylulose 5-phosphate is bound at residue threonine 111. The Proton donor role is filled by histidine 202. Residues aspartate 203 and 225 to 226 (GH) contribute to the 3-amino-2-oxopropyl phosphate site.

This sequence belongs to the PNP synthase family. In terms of assembly, homooctamer; tetramer of dimers.

Its subcellular location is the cytoplasm. It catalyses the reaction 3-amino-2-oxopropyl phosphate + 1-deoxy-D-xylulose 5-phosphate = pyridoxine 5'-phosphate + phosphate + 2 H2O + H(+). Its pathway is cofactor biosynthesis; pyridoxine 5'-phosphate biosynthesis; pyridoxine 5'-phosphate from D-erythrose 4-phosphate: step 5/5. Catalyzes the complicated ring closure reaction between the two acyclic compounds 1-deoxy-D-xylulose-5-phosphate (DXP) and 3-amino-2-oxopropyl phosphate (1-amino-acetone-3-phosphate or AAP) to form pyridoxine 5'-phosphate (PNP) and inorganic phosphate. The protein is Pyridoxine 5'-phosphate synthase of Xanthomonas oryzae pv. oryzae (strain PXO99A).